Here is a 398-residue protein sequence, read N- to C-terminus: Enoyl-[acyl-carrier-protein] reductase [NADH] (398 aa).

NAD(+)-binding positions include 48-53 (GASTGY), 74-75 (FE), 111-112 (DA), and 139-140 (LA). Y225 provides a ligand contact to substrate. The active-site Proton donor is the Y235. Residues K244 and 273–275 (VVT) each bind NAD(+).

Belongs to the TER reductase family. As to quaternary structure, monomer.

It catalyses the reaction a 2,3-saturated acyl-[ACP] + NAD(+) = a (2E)-enoyl-[ACP] + NADH + H(+). The protein operates within lipid metabolism; fatty acid biosynthesis. Involved in the final reduction of the elongation cycle of fatty acid synthesis (FAS II). Catalyzes the reduction of a carbon-carbon double bond in an enoyl moiety that is covalently linked to an acyl carrier protein (ACP). This chain is Enoyl-[acyl-carrier-protein] reductase [NADH], found in Paraburkholderia xenovorans (strain LB400).